A 317-amino-acid polypeptide reads, in one-letter code: Tumor necrosis factor ligand superfamily member 11 (317 aa).

Residues M1 to E16 show a composition bias toward basic and acidic residues. The segment at M1–A43 is disordered. Topologically, residues M1–S47 are cytoplasmic. The segment covering H31–P41 has biased composition (pro residues). A helical; Signal-anchor for type II membrane protein transmembrane segment spans residues M48–F68. Topologically, residues Y69–D317 are extracellular. One can recognise a THD domain in the interval P164–V313. N-linked (GlcNAc...) asparagine glycans are attached at residues N171 and N198.

It belongs to the tumor necrosis factor family. Homotrimer. Interacts with TNFRSF11B. Interacts with TNFRSF11A. Interacts with FBN1 (via N-terminal domain) in a Ca(+2)-dependent manner. Interacts with TNFAIP6 (via both Link and CUB domains). In terms of processing, the soluble form of isoform 1 derives from the membrane form by proteolytic processing. The cleavage may be catalyzed by ADAM17. As to expression, highest in the peripheral lymph nodes, weak in spleen, peripheral blood Leukocytes, bone marrow, heart, placenta, skeletal muscle, stomach and thyroid.

The protein localises to the cell membrane. It is found in the cytoplasm. It localises to the secreted. In terms of biological role, cytokine that binds to TNFRSF11B/OPG and to TNFRSF11A/RANK. Osteoclast differentiation and activation factor. Augments the ability of dendritic cells to stimulate naive T-cell proliferation. May be an important regulator of interactions between T-cells and dendritic cells and may play a role in the regulation of the T-cell-dependent immune response. May also play an important role in enhanced bone-resorption in humoral hypercalcemia of malignancy. Induces osteoclastogenesis by activating multiple signaling pathways in osteoclast precursor cells, chief among which is induction of long lasting oscillations in the intracellular concentration of Ca (2+) resulting in the activation of NFATC1, which translocates to the nucleus and induces osteoclast-specific gene transcription to allow differentiation of osteoclasts. During osteoclast differentiation, in a TMEM64 and ATP2A2-dependent manner induces activation of CREB1 and mitochondrial ROS generation necessary for proper osteoclast generation. This Homo sapiens (Human) protein is Tumor necrosis factor ligand superfamily member 11 (TNFSF11).